The following is a 255-amino-acid chain: MSGHSKWHSIRRTKGVLDQRRGQLFTKLARDITIATREGGSGDPEANFRLRLAVDKARAANMPMDNIQRAIDRGLGRGGSDAAALEEIYYEGYAPGGVALLIEAATDNRNRTASDVRATMTKNGGSPGEPGSVSWMFETRGLITIDLSVKRLDPDEVMLIAIDAGAEDVQIEDDIVEVYTDFKQLAAVRQQLIAAGLPVTGAEKTMIAKTTVQPDTADALKAMRLIEKLEDLDDVQKVYSNLEITSELAEQFVSG.

This sequence belongs to the TACO1 family.

Its subcellular location is the cytoplasm. The protein is Probable transcriptional regulatory protein Rcas_0718 of Roseiflexus castenholzii (strain DSM 13941 / HLO8).